The sequence spans 243 residues: GTP cyclohydrolase 1 (243 aa).

A Phosphothreonine modification is found at T15. Residues 18 to 55 form a disordered region; that stretch reads NIRPTSPYTLNPPVERDGFSWPSVGTRQRAEETEEEEK. Phosphoserine is present on S23. Positions 132, 135, and 203 each coordinate Zn(2+).

It belongs to the GTP cyclohydrolase I family. In terms of assembly, homodimer.

The catalysed reaction is GTP + H2O = 7,8-dihydroneopterin 3'-triphosphate + formate + H(+). It participates in cofactor biosynthesis; 7,8-dihydroneopterin triphosphate biosynthesis; 7,8-dihydroneopterin triphosphate from GTP: step 1/1. In terms of biological role, GTP cyclohydrolase 1 is the first enzyme in the biosynthetic pathway leading to folic acid. This Saccharomyces cerevisiae (strain ATCC 204508 / S288c) (Baker's yeast) protein is GTP cyclohydrolase 1.